Reading from the N-terminus, the 311-residue chain is Olfactory receptor 1N1 (311 aa).

Topologically, residues 1 to 23 (MENQSSISEFFLRGISAPPEQQQ) are extracellular. Asn3 carries an N-linked (GlcNAc...) asparagine glycan. A helical transmembrane segment spans residues 24–47 (SLFGIFLCMYLVTLTGNLLIILAI). At 48 to 55 (GSDLHLHT) the chain is on the cytoplasmic side. The helical transmembrane segment at 56 to 77 (PMYFFLANLSFVDMGLTSSTVT) threads the bilayer. The Extracellular segment spans residues 78–98 (KMLVNIQTRHHTISYTGCLTQ). Cys95 and Cys187 form a disulfide bridge. Residues 99-118 (MYFFLMFGDLDSFFLAAMAY) traverse the membrane as a helical segment. At 119-137 (DRYVAICHPLCYSTVMRPQ) the chain is on the cytoplasmic side. A helical transmembrane segment spans residues 138–156 (VCALMLALCWVLTNIVALT). The Extracellular portion of the chain corresponds to 157 to 194 (HTFLMARLSFCVTGEIAHFFCDITPVLKLSCSDTHINE). A helical membrane pass occupies residues 195 to 217 (MMVFVLGGTVLIVPFLCIVTSYI). Topologically, residues 218-234 (HIVPAILRVRTRGGVGK) are cytoplasmic. Residues 235–257 (AFSTCSSHLCVVCVFYGTLFSAY) traverse the membrane as a helical segment. At 258–270 (LCPPSIASEEKDI) the chain is on the extracellular side. Residues 271–290 (AAAAMYTIVTPMLNPFIYSL) traverse the membrane as a helical segment. Over 291–311 (RNKDMKGALKRLFSHRSIVSS) the chain is Cytoplasmic.

This sequence belongs to the G-protein coupled receptor 1 family.

It localises to the cell membrane. In terms of biological role, odorant receptor. The sequence is that of Olfactory receptor 1N1 (OR1N1) from Homo sapiens (Human).